Consider the following 552-residue polypeptide: MRSDIVKKGIEKAPHRSLFKAMGYTDEELERPLIGVANSKSEIIPGHIHLDKLTEAVKAGIRMAGGTPIEFGAIGVCDGIAMGHTGMKYSLATRELIADSCEAMSKAHSFDGMVFIPNCDKIVPGMLMAAARINIPSIVISGGPMLSLNRDGKQLDLNSLFEAVGSYKAGTMTKEEVDDIEDHACPGCGSCSGMFTANSMNCLTEVLGMGLTGNGTIPAVYAERIRLAKYAGMKIMELVEKDIKPSDILTNEAFENALTVDMALGCSTNSVLHLPAIANELGIEINLDIINEISSRTPNLCKLAPAGKYHIQDLYSAGGVQAVMSELAKKDLLHLDLVTATGKTIRENIQNAKVKDYEIVKSIDTPYSATGGIAVLRGNIAPDGAVVKKSAVAEKMLIHTGPARVFDSEDEAITAIYSGQINKGDVVIIRYEGPKGGPGMREMLSPTSAIAGMGLDSDVALITDGRFSGASRGASIGHVSPEAMEGGPIALVQEGDIVDIDIPAGRINIQVTNEEMVKRKESWKAPKPKITTGYLGRYARLVTSASTGAVLK.

Residue aspartate 78 participates in Mg(2+) binding. A [2Fe-2S] cluster-binding site is contributed by cysteine 119. The Mg(2+) site is built by aspartate 120 and lysine 121. Residue lysine 121 is modified to N6-carboxylysine. [2Fe-2S] cluster is bound at residue cysteine 191. Glutamate 442 provides a ligand contact to Mg(2+). The active-site Proton acceptor is serine 468.

The protein belongs to the IlvD/Edd family. As to quaternary structure, homodimer. [2Fe-2S] cluster serves as cofactor. Mg(2+) is required as a cofactor.

It carries out the reaction (2R)-2,3-dihydroxy-3-methylbutanoate = 3-methyl-2-oxobutanoate + H2O. It catalyses the reaction (2R,3R)-2,3-dihydroxy-3-methylpentanoate = (S)-3-methyl-2-oxopentanoate + H2O. It functions in the pathway amino-acid biosynthesis; L-isoleucine biosynthesis; L-isoleucine from 2-oxobutanoate: step 3/4. The protein operates within amino-acid biosynthesis; L-valine biosynthesis; L-valine from pyruvate: step 3/4. Functions in the biosynthesis of branched-chain amino acids. Catalyzes the dehydration of (2R,3R)-2,3-dihydroxy-3-methylpentanoate (2,3-dihydroxy-3-methylvalerate) into 2-oxo-3-methylpentanoate (2-oxo-3-methylvalerate) and of (2R)-2,3-dihydroxy-3-methylbutanoate (2,3-dihydroxyisovalerate) into 2-oxo-3-methylbutanoate (2-oxoisovalerate), the penultimate precursor to L-isoleucine and L-valine, respectively. The protein is Dihydroxy-acid dehydratase of Ruminiclostridium cellulolyticum (strain ATCC 35319 / DSM 5812 / JCM 6584 / H10) (Clostridium cellulolyticum).